Consider the following 288-residue polypeptide: Proteasome subunit beta (288 aa).

A propeptide spans 1–57 (MTAGDPMRLHPGHALSSFTEHLRALAPELLGPNRFAALDGATGSSGGTGAKDIAPHG) (removed in mature form; by autocatalysis). Residue threonine 58 is the Nucleophile of the active site.

The protein belongs to the peptidase T1B family. The 20S proteasome core is composed of 14 alpha and 14 beta subunits that assemble into four stacked heptameric rings, resulting in a barrel-shaped structure. The two inner rings, each composed of seven catalytic beta subunits, are sandwiched by two outer rings, each composed of seven alpha subunits. The catalytic chamber with the active sites is on the inside of the barrel. Has a gated structure, the ends of the cylinder being occluded by the N-termini of the alpha-subunits. Is capped by the proteasome-associated ATPase, ARC.

It localises to the cytoplasm. It carries out the reaction Cleavage of peptide bonds with very broad specificity.. It participates in protein degradation; proteasomal Pup-dependent pathway. The formation of the proteasomal ATPase ARC-20S proteasome complex, likely via the docking of the C-termini of ARC into the intersubunit pockets in the alpha-rings, may trigger opening of the gate for substrate entry. Interconversion between the open-gate and close-gate conformations leads to a dynamic regulation of the 20S proteasome proteolysis activity. Its function is as follows. Component of the proteasome core, a large protease complex with broad specificity involved in protein degradation. This chain is Proteasome subunit beta, found in Nocardia farcinica (strain IFM 10152).